We begin with the raw amino-acid sequence, 288 residues long: MKGSEFQSKWRAYCRLMRIDKPIGSLLLLWPTLWALWLAGKGIPDTKILIVFVLGVFFMRAAGCVVNDYADRRIDGFVKRTASRPLPSGLISERESKILFVVLVLLSFGLVLTLNSMTIWLSLAALALAWVYPFMKRVTHLPQVVLGAAFGWSIPMGFAAVSENLPLVCWLLLLANICWTVAYDTQYAMVDRDDDLKIGVKSTAILFGQQDKLIIGLLQLATLVLMVTIGWLMNLGGAFYWSILLAGALFVHQQKMIAGRERDPCFRAFLNNNYVGLVLFLGIFISYL.

The next 8 helical transmembrane spans lie at 23-43 (IGSLLLLWPTLWALWLAGKGI), 46-66 (TKILIVFVLGVFFMRAAGCVV), 98-118 (ILFVVLVLLSFGLVLTLNSMT), 141-161 (LPQVVLGAAFGWSIPMGFAAV), 165-185 (LPLVCWLLLLANICWTVAYDT), 213-233 (LIIGLLQLATLVLMVTIGWLM), 234-254 (NLGGAFYWSILLAGALFVHQQ), and 268-288 (AFLNNNYVGLVLFLGIFISYL).

Belongs to the UbiA prenyltransferase family. Mg(2+) serves as cofactor.

The protein resides in the cell inner membrane. The catalysed reaction is all-trans-octaprenyl diphosphate + 4-hydroxybenzoate = 4-hydroxy-3-(all-trans-octaprenyl)benzoate + diphosphate. It functions in the pathway cofactor biosynthesis; ubiquinone biosynthesis. In terms of biological role, catalyzes the prenylation of para-hydroxybenzoate (PHB) with an all-trans polyprenyl group. Mediates the second step in the final reaction sequence of ubiquinone-8 (UQ-8) biosynthesis, which is the condensation of the polyisoprenoid side chain with PHB, generating the first membrane-bound Q intermediate 3-octaprenyl-4-hydroxybenzoate. The protein is 4-hydroxybenzoate octaprenyltransferase of Yersinia enterocolitica serotype O:8 / biotype 1B (strain NCTC 13174 / 8081).